The following is a 360-amino-acid chain: Histidinol-phosphate aminotransferase (360 aa).

At Lys-218 the chain carries N6-(pyridoxal phosphate)lysine.

This sequence belongs to the class-II pyridoxal-phosphate-dependent aminotransferase family. Histidinol-phosphate aminotransferase subfamily. As to quaternary structure, homodimer. It depends on pyridoxal 5'-phosphate as a cofactor.

It catalyses the reaction L-histidinol phosphate + 2-oxoglutarate = 3-(imidazol-4-yl)-2-oxopropyl phosphate + L-glutamate. The protein operates within amino-acid biosynthesis; L-histidine biosynthesis; L-histidine from 5-phospho-alpha-D-ribose 1-diphosphate: step 7/9. The protein is Histidinol-phosphate aminotransferase of Pelagibacter ubique (strain HTCC1062).